We begin with the raw amino-acid sequence, 75 residues long: Cruzioseptin-6 (75 aa).

The N-terminal stretch at 1-22 (MAYLKKSLFLVLFLGLVSLSIC) is a signal peptide. Positions 23-43 (EEEKREEENEEEQEDDDQSEE) are excised as a propeptide. The disordered stretch occupies residues 24–44 (EEKREEENEEEQEDDDQSEEK). The span at 30–41 (ENEEEQEDDDQS) shows a compositional bias: acidic residues.

Expressed by the skin glands.

The protein localises to the secreted. Its function is as follows. Has antimicrobial activity. In Cruziohyla calcarifer (Splendid leaf frog), this protein is Cruzioseptin-6.